Here is a 364-residue protein sequence, read N- to C-terminus: Spermidine/putrescine import ATP-binding protein PotA (364 aa).

The ABC transporter domain maps to 5–235 (LSFKGVTKGF…PVNRFVADFI (231 aa)). 37–44 (GPSGCGKT) is a binding site for ATP.

The protein belongs to the ABC transporter superfamily. Spermidine/putrescine importer (TC 3.A.1.11.1) family. As to quaternary structure, the complex is composed of two ATP-binding proteins (PotA), two transmembrane proteins (PotB and PotC) and a solute-binding protein (PotD).

Its subcellular location is the cell membrane. It catalyses the reaction ATP + H2O + polyamine-[polyamine-binding protein]Side 1 = ADP + phosphate + polyamineSide 2 + [polyamine-binding protein]Side 1.. Part of the ABC transporter complex PotABCD involved in spermidine/putrescine import. Responsible for energy coupling to the transport system. This chain is Spermidine/putrescine import ATP-binding protein PotA, found in Staphylococcus haemolyticus (strain JCSC1435).